The sequence spans 64 residues: Small ribosomal subunit protein bS21 (64 aa).

Belongs to the bacterial ribosomal protein bS21 family.

This Karelsulcia muelleri (strain GWSS) (Sulcia muelleri) protein is Small ribosomal subunit protein bS21.